We begin with the raw amino-acid sequence, 505 residues long: Maturase K (505 aa).

This sequence belongs to the intron maturase 2 family. MatK subfamily.

The protein localises to the plastid. Its subcellular location is the chloroplast. Usually encoded in the trnK tRNA gene intron. Probably assists in splicing its own and other chloroplast group II introns. This Kunzea ericoides (White teatree) protein is Maturase K.